Reading from the N-terminus, the 182-residue chain is Putative manganese efflux pump MntP (182 aa).

6 consecutive transmembrane segments (helical) span residues 6-26 (LIPL…VSLG), 37-57 (ILYI…IGMV), 71-91 (HFAG…SSIL), 101-121 (IGIS…SVGL), 131-151 (VITI…GLFI), and 162-182 (YGEI…LFPI).

The protein belongs to the MntP (TC 9.B.29) family.

It is found in the cell membrane. In terms of biological role, probably functions as a manganese efflux pump. This Bacillus cereus (strain AH187) protein is Putative manganese efflux pump MntP.